A 968-amino-acid chain; its full sequence is RNA polymerase-associated protein RapA (968 aa).

A Helicase ATP-binding domain is found at 164–334; it reads DVGRRHAPRV…FARLRLLDPN (171 aa). 177-184 lines the ATP pocket; that stretch reads DEVGLGKT. The DEAH box motif lies at 280 to 283; that stretch reads DEAH. The region spanning 490–662 is the Helicase C-terminal domain; the sequence is RVEWLMGYLT…YLASPDQTEG (173 aa).

It belongs to the SNF2/RAD54 helicase family. RapA subfamily. As to quaternary structure, interacts with the RNAP. Has a higher affinity for the core RNAP than for the holoenzyme. Its ATPase activity is stimulated by binding to RNAP.

Its function is as follows. Transcription regulator that activates transcription by stimulating RNA polymerase (RNAP) recycling in case of stress conditions such as supercoiled DNA or high salt concentrations. Probably acts by releasing the RNAP, when it is trapped or immobilized on tightly supercoiled DNA. Does not activate transcription on linear DNA. Probably not involved in DNA repair. The chain is RNA polymerase-associated protein RapA from Shigella flexneri serotype 5b (strain 8401).